A 1138-amino-acid polypeptide reads, in one-letter code: Serine/threonine/tyrosine-interacting-like protein 2 (1138 aa).

Residues 1-20 (MATGGDAEEEQVVPNEEDEA) are disordered. Residues 132-280 (NEVDEVWPNV…LRELNEKLME (149 aa)) enclose the Tyrosine-protein phosphatase domain. A Phosphoserine modification is found at S291. 8 disordered regions span residues 309–336 (EEEDDATSHLSGSSLGKASQVSKPVTLI), 348–473 (EWRK…TWDM), 486–515 (ARKYRSKSKREELDGDCSEAGGRVREDDEE), 552–575 (KKDSEAGDGGSEHGTEEAAAGEKN), 592–618 (QKKVGSENKEEVVEMSKGEDTVLAKKR), 660–694 (AAPSVSADGDTASVLSTQSHRSHASNMPATPLPNL), 761–800 (SGCLPPPSQGRPSSDVQSVLSSTSSLTSRAEGSGNKVRGT), and 850–1117 (FKKK…DEAI). Polar residues predominate over residues 316 to 331 (SHLSGSSLGKASQVSK). S373 is subject to Phosphoserine. Acidic residues predominate over residues 376-385 (DGDDCEDEDV). A compositionally biased stretch (basic and acidic residues) spans 386-409 (ERIIQEWQSRNERYQAKGREQWNR). T427 is modified (phosphothreonine). Residues S503 and S555 each carry the phosphoserine modification. Basic and acidic residues-rich tracts occupy residues 552–567 (KKDSEAGDGGSEHGTE) and 595–614 (VGSENKEEVVEMSKGEDTVL). Polar residues predominate over residues 672-687 (SVLSTQSHRSHASNMP). A compositionally biased stretch (low complexity) spans 773–788 (SSDVQSVLSSTSSLTS). The segment covering 858 to 871 (DEDMSVGDRDEDTD) has biased composition (acidic residues). S862 bears the Phosphoserine mark. The segment covering 878-897 (RYSSRSNSQKPETDASSSLA) has biased composition (polar residues). A Phosphoserine modification is found at S929. Over residues 936 to 947 (SGSSRGRYTRSS) the composition is skewed to low complexity. Positions 965–977 (RSQEQDTSFHEAN) are enriched in basic and acidic residues. At S966 the chain carries Phosphoserine. Residues 980–992 (TVRNTSRFSSSTT) are compositionally biased toward polar residues. S1016 is subject to Phosphoserine. Composition is skewed to basic and acidic residues over residues 1035-1059 (PEPRRPNWTRPRDWEDVEESSKSDF) and 1074-1091 (RSEEEGEKERTENREEGR). Over residues 1095–1106 (GRQSQYRRSTNQ) the composition is skewed to polar residues. The segment covering 1107–1116 (QEEEEMDDEA) has biased composition (acidic residues).

The protein belongs to the protein-tyrosine phosphatase family. Non-receptor class dual specificity subfamily.

The protein resides in the cytoplasm. Its subcellular location is the myofibril. It localises to the sarcomere. In terms of biological role, may be required for myofiber maturation. The chain is Serine/threonine/tyrosine-interacting-like protein 2 (Styxl2) from Mus musculus (Mouse).